Here is a 475-residue protein sequence, read N- to C-terminus: Ribulose bisphosphate carboxylase large chain (475 aa).

Residues 1-2 (MS) constitute a propeptide that is removed on maturation. Pro3 is subject to N-acetylproline. Position 14 is an N6,N6,N6-trimethyllysine (Lys14). Substrate is bound by residues Asn123 and Thr173. Lys175 acts as the Proton acceptor in catalysis. Lys177 contacts substrate. Lys201, Asp203, and Glu204 together coordinate Mg(2+). Lys201 carries the post-translational modification N6-carboxylysine. His294 serves as the catalytic Proton acceptor. Arg295, His327, and Ser379 together coordinate substrate.

The protein belongs to the RuBisCO large chain family. Type I subfamily. Heterohexadecamer of 8 large chains and 8 small chains; disulfide-linked. The disulfide link is formed within the large subunit homodimers. Mg(2+) is required as a cofactor. Post-translationally, the disulfide bond which can form in the large chain dimeric partners within the hexadecamer appears to be associated with oxidative stress and protein turnover.

It localises to the plastid. The protein localises to the chloroplast. It carries out the reaction 2 (2R)-3-phosphoglycerate + 2 H(+) = D-ribulose 1,5-bisphosphate + CO2 + H2O. It catalyses the reaction D-ribulose 1,5-bisphosphate + O2 = 2-phosphoglycolate + (2R)-3-phosphoglycerate + 2 H(+). Functionally, ruBisCO catalyzes two reactions: the carboxylation of D-ribulose 1,5-bisphosphate, the primary event in carbon dioxide fixation, as well as the oxidative fragmentation of the pentose substrate in the photorespiration process. Both reactions occur simultaneously and in competition at the same active site. The sequence is that of Ribulose bisphosphate carboxylase large chain from Illicium oligandrum (Star anise).